Reading from the N-terminus, the 218-residue chain is Small ribosomal subunit protein uS3 (218 aa).

Residues 38–106 (LRSDLKKKLM…PVHLNIEEVK (69 aa)) enclose the KH type-2 domain.

The protein belongs to the universal ribosomal protein uS3 family. As to quaternary structure, part of the 30S ribosomal subunit. Forms a tight complex with proteins S10 and S14.

Its function is as follows. Binds the lower part of the 30S subunit head. Binds mRNA in the 70S ribosome, positioning it for translation. This Legionella pneumophila (strain Lens) protein is Small ribosomal subunit protein uS3.